The following is an 875-amino-acid chain: Alanine--tRNA ligase (875 aa).

Zn(2+) contacts are provided by His-564, His-568, Cys-666, and His-670.

Belongs to the class-II aminoacyl-tRNA synthetase family. As to quaternary structure, homotetramer. Zn(2+) is required as a cofactor.

Its subcellular location is the cytoplasm. The catalysed reaction is tRNA(Ala) + L-alanine + ATP = L-alanyl-tRNA(Ala) + AMP + diphosphate. Catalyzes the attachment of alanine to tRNA(Ala) in a two-step reaction: alanine is first activated by ATP to form Ala-AMP and then transferred to the acceptor end of tRNA(Ala). Also edits incorrectly charged Ser-tRNA(Ala) and Gly-tRNA(Ala) via its editing domain. The chain is Alanine--tRNA ligase from Klebsiella pneumoniae subsp. pneumoniae (strain ATCC 700721 / MGH 78578).